The sequence spans 37 residues: Cytochrome b6-f complex subunit 5 (37 aa).

A helical membrane pass occupies residues 5–25; sequence LLCGIVLGLIPITLAGLFMAA.

This sequence belongs to the PetG family. In terms of assembly, the 4 large subunits of the cytochrome b6-f complex are cytochrome b6, subunit IV (17 kDa polypeptide, PetD), cytochrome f and the Rieske protein, while the 4 small subunits are PetG, PetL, PetM and PetN. The complex functions as a dimer.

It localises to the cellular thylakoid membrane. In terms of biological role, component of the cytochrome b6-f complex, which mediates electron transfer between photosystem II (PSII) and photosystem I (PSI), cyclic electron flow around PSI, and state transitions. PetG is required for either the stability or assembly of the cytochrome b6-f complex. The sequence is that of Cytochrome b6-f complex subunit 5 from Synechococcus elongatus (strain ATCC 33912 / PCC 7942 / FACHB-805) (Anacystis nidulans R2).